The chain runs to 129 residues: Lysozyme C-3 (129 aa).

Positions 1–129 constitute a C-type lysozyme domain; sequence KVYERCELAA…VSRWIRGCRL (129 aa). 4 disulfide bridges follow: Cys6–Cys127, Cys30–Cys115, Cys64–Cys80, and Cys76–Cys94. Active-site residues include Glu35 and Asp52.

Belongs to the glycosyl hydrolase 22 family.

It is found in the secreted. The catalysed reaction is Hydrolysis of (1-&gt;4)-beta-linkages between N-acetylmuramic acid and N-acetyl-D-glucosamine residues in a peptidoglycan and between N-acetyl-D-glucosamine residues in chitodextrins.. Functionally, lysozymes have primarily a bacteriolytic function; those in tissues and body fluids are associated with the monocyte-macrophage system and enhance the activity of immunoagents. This Anas platyrhynchos (Mallard) protein is Lysozyme C-3.